Consider the following 553-residue polypeptide: MLNNRASKIGAILLALFFVLTYLFPLNSRLLWQPDETRYAEISREMVVSGNWIVPHMLDIRYFEKPIAGYWINNISQLIFGHTNFAVRFGSVISILLSALLIYLLARMMWRNRQVAFVASLIYLSMFLVFSVGTYSVLDPMLALWVTASMVCCFWALKATTAKTRILAWITLGLACGMAFMTKGFLALAIPVIVMIPVTLYQKQFTRMLLYGVLAVLSAALISLPWVLAVAKAEPDYWHYFFWVEHIQRFSGDDAQHSSPFWYYIPIILLGVIPWLGLLPGALTSAWKKRRKRPELFFLLCWFVVPFLFFSIAKGKLPTYMLPFMGPLAMLMAKYGVDCARKFKMKALRINGYINIFIGVAAVVAILIIQLVSSKPIYMPYEWSKWVLAIVAFSLWGIIGYLCSTLNGKHWLWAASCSLGVSLCIGQAIPNSSIDGKLPQEFIRQNIDTLNASKYIVSNSVGVGAGLAWELQRSDIYLYERTGELTYGIEYPDSQHRLLKPESFEQWLENARKEGNVSVVITYKDPKKLAQMPRPEELVTNRRMAILTYEKRK.

A run of 12 helical transmembrane segments spans residues 6 to 26 (ASKIGAILLALFFVLTYLFPL), 85 to 105 (FAVRFGSVISILLSALLIYLL), 115 to 135 (VAFVASLIYLSMFLVFSVGTY), 137 to 157 (VLDPMLALWVTASMVCCFWAL), 178 to 198 (MAFMTKGFLALAIPVIVMIPV), 208 to 228 (MLLYGVLAVLSAALISLPWVL), 261 to 281 (FWYYIPIILLGVIPWLGLLPG), 295 to 315 (ELFFLLCWFVVPFLFFSIAKG), 317 to 337 (LPTYMLPFMGPLAMLMAKYGV), 352 to 372 (GYINIFIGVAAVVAILIIQLV), 386 to 406 (WVLAIVAFSLWGIIGYLCSTL), and 410 to 430 (HWLWAASCSLGVSLCIGQAIP).

Belongs to the glycosyltransferase 83 family.

The protein resides in the cell inner membrane. The enzyme catalyses 4-amino-4-deoxy-alpha-L-arabinopyranosyl di-trans,octa-cis-undecaprenyl phosphate + lipid IVA = lipid IIA + di-trans,octa-cis-undecaprenyl phosphate.. It participates in lipopolysaccharide metabolism; 4-amino-4-deoxy-beta-L-arabinose-lipid A biosynthesis. Catalyzes the transfer of the L-Ara4N moiety of the glycolipid undecaprenyl phosphate-alpha-L-Ara4N to lipid A. The modified arabinose is attached to lipid A and is required for resistance to polymyxin and cationic antimicrobial peptides. The protein is Undecaprenyl phosphate-alpha-4-amino-4-deoxy-L-arabinose arabinosyl transferase 2 of Proteus mirabilis (strain HI4320).